The following is a 97-amino-acid chain: Aspartyl/glutamyl-tRNA(Asn/Gln) amidotransferase subunit C (97 aa).

Belongs to the GatC family. As to quaternary structure, heterotrimer of A, B and C subunits.

The catalysed reaction is L-glutamyl-tRNA(Gln) + L-glutamine + ATP + H2O = L-glutaminyl-tRNA(Gln) + L-glutamate + ADP + phosphate + H(+). It catalyses the reaction L-aspartyl-tRNA(Asn) + L-glutamine + ATP + H2O = L-asparaginyl-tRNA(Asn) + L-glutamate + ADP + phosphate + 2 H(+). Functionally, allows the formation of correctly charged Asn-tRNA(Asn) or Gln-tRNA(Gln) through the transamidation of misacylated Asp-tRNA(Asn) or Glu-tRNA(Gln) in organisms which lack either or both of asparaginyl-tRNA or glutaminyl-tRNA synthetases. The reaction takes place in the presence of glutamine and ATP through an activated phospho-Asp-tRNA(Asn) or phospho-Glu-tRNA(Gln). The chain is Aspartyl/glutamyl-tRNA(Asn/Gln) amidotransferase subunit C from Listeria welshimeri serovar 6b (strain ATCC 35897 / DSM 20650 / CCUG 15529 / CIP 8149 / NCTC 11857 / SLCC 5334 / V8).